We begin with the raw amino-acid sequence, 207 residues long: Guanylate kinase (207 aa).

In terms of domain architecture, Guanylate kinase-like spans 4–184; the sequence is GTLYIVSAPS…ALSDLKTIIR (181 aa). 11–18 provides a ligand contact to ATP; that stretch reads APSGAGKS.

It belongs to the guanylate kinase family.

It localises to the cytoplasm. The enzyme catalyses GMP + ATP = GDP + ADP. In terms of biological role, essential for recycling GMP and indirectly, cGMP. The protein is Guanylate kinase (gmk) of Salmonella typhimurium (strain LT2 / SGSC1412 / ATCC 700720).